Consider the following 224-residue polypeptide: Menaquinol:cytochrome c reductase cytochrome b subunit (224 aa).

The helical transmembrane segment at 37-57 threads the bilayer; sequence FSAFVYCFGGLTFFVTVIQVL. Tyr42 contributes to the heme b binding site. Cys43 contacts heme c. Heme b contacts are provided by Arg91, His94, His108, and Arg111. The next 3 membrane-spanning stretches (helical) occupy residues 96-116, 126-146, and 195-215; these read WGAS…FFQG, WIVG…GYLL, and IHVF…FIMI. Heme b contacts are provided by His196 and His211. Heme c is bound by residues Arg216 and Ile220. Ser221 contributes to the heme b binding site.

This sequence belongs to the cytochrome b family. The main subunits of the menaquinol:cytochrome c complex are a Rieske-type iron-sulfur protein (QcrA), a cytochrome b (QcrB) and a cytochrome c (QcrC). Heme b serves as cofactor. It depends on heme c as a cofactor.

The protein localises to the cell membrane. Component of the menaquinol:cytochrome c reductase complex. This is Menaquinol:cytochrome c reductase cytochrome b subunit from Bacillus subtilis (strain 168).